A 796-amino-acid polypeptide reads, in one-letter code: Bud site selection protein 27 (796 aa).

Positions 81–121 (KEEAITFVDDKLKLMEDAIEQFNLKIEEAKKTLDNLNHMED) form a coiled coil. Polar residues predominate over residues 152-168 (VISSSVTPTTKQPSQSN). Disordered regions lie at residues 152–197 (VISS…EENL), 300–344 (LRAQ…QVGF), 421–458 (EGEA…TTRS), 535–624 (EKEP…AKTG), and 752–796 (ATAS…DSKP). 2 stretches are compositionally biased toward basic and acidic residues: residues 169–197 (SKKE…EENL) and 306–318 (SQDH…DVNK). Residues 427–441 (SNRRTRVSRFRKDRA) show a composition bias toward basic residues. Over residues 535-550 (EKEPEINSKSEFETPF) the composition is skewed to basic and acidic residues. The span at 551 to 568 (KKKKLKSLQKPRSSKSMK) shows a compositional bias: basic residues. Over residues 579 to 589 (ISDDDYDDDDD) the composition is skewed to acidic residues. S580 bears the Phosphoserine mark. Residues 601 to 610 (NNTDEQDKFP) show a composition bias toward basic and acidic residues.

It belongs to the prefoldin subunit alpha family.

Its subcellular location is the cytoplasm. Its function is as follows. Involved in gene expression controlled by TOR kinase and nutrient signaling. May also be involved in positioning the proximal bud pole signal. The chain is Bud site selection protein 27 (BUD27) from Saccharomyces cerevisiae (strain ATCC 204508 / S288c) (Baker's yeast).